A 165-amino-acid polypeptide reads, in one-letter code: Large ribosomal subunit protein uL10 (165 aa).

This sequence belongs to the universal ribosomal protein uL10 family. As to quaternary structure, part of the ribosomal stalk of the 50S ribosomal subunit. The N-terminus interacts with L11 and the large rRNA to form the base of the stalk. The C-terminus forms an elongated spine to which L12 dimers bind in a sequential fashion forming a multimeric L10(L12)X complex.

In terms of biological role, forms part of the ribosomal stalk, playing a central role in the interaction of the ribosome with GTP-bound translation factors. The chain is Large ribosomal subunit protein uL10 from Buchnera aphidicola subsp. Schizaphis graminum (strain Sg).